The primary structure comprises 434 residues: 3-phosphoshikimate 1-carboxyvinyltransferase (434 aa).

3 residues coordinate 3-phosphoshikimate: Lys-22, Ser-23, and Arg-27. Lys-22 serves as a coordination point for phosphoenolpyruvate. Residues Gly-93 and Arg-121 each coordinate phosphoenolpyruvate. Ser-168, Ser-169, Gln-170, Ser-199, Asp-320, and Lys-347 together coordinate 3-phosphoshikimate. A phosphoenolpyruvate-binding site is contributed by Gln-170. The active-site Proton acceptor is the Asp-320. Phosphoenolpyruvate is bound by residues Arg-351, Arg-394, and Lys-419.

Belongs to the EPSP synthase family. In terms of assembly, monomer.

It is found in the cytoplasm. It catalyses the reaction 3-phosphoshikimate + phosphoenolpyruvate = 5-O-(1-carboxyvinyl)-3-phosphoshikimate + phosphate. Its pathway is metabolic intermediate biosynthesis; chorismate biosynthesis; chorismate from D-erythrose 4-phosphate and phosphoenolpyruvate: step 6/7. Catalyzes the transfer of the enolpyruvyl moiety of phosphoenolpyruvate (PEP) to the 5-hydroxyl of shikimate-3-phosphate (S3P) to produce enolpyruvyl shikimate-3-phosphate and inorganic phosphate. This chain is 3-phosphoshikimate 1-carboxyvinyltransferase, found in Burkholderia orbicola (strain AU 1054).